Consider the following 574-residue polypeptide: Proline--tRNA ligase (574 aa).

This sequence belongs to the class-II aminoacyl-tRNA synthetase family. ProS type 1 subfamily. In terms of assembly, homodimer.

The protein localises to the cytoplasm. It catalyses the reaction tRNA(Pro) + L-proline + ATP = L-prolyl-tRNA(Pro) + AMP + diphosphate. Its function is as follows. Catalyzes the attachment of proline to tRNA(Pro) in a two-step reaction: proline is first activated by ATP to form Pro-AMP and then transferred to the acceptor end of tRNA(Pro). As ProRS can inadvertently accommodate and process non-cognate amino acids such as alanine and cysteine, to avoid such errors it has two additional distinct editing activities against alanine. One activity is designated as 'pretransfer' editing and involves the tRNA(Pro)-independent hydrolysis of activated Ala-AMP. The other activity is designated 'posttransfer' editing and involves deacylation of mischarged Ala-tRNA(Pro). The misacylated Cys-tRNA(Pro) is not edited by ProRS. This Teredinibacter turnerae (strain ATCC 39867 / T7901) protein is Proline--tRNA ligase.